Here is a 597-residue protein sequence, read N- to C-terminus: Arginine--tRNA ligase (597 aa).

Positions 125 to 135 (PNTNKPLHLGH) match the 'HIGH' region motif.

The protein belongs to the class-I aminoacyl-tRNA synthetase family. As to quaternary structure, monomer.

It is found in the cytoplasm. The enzyme catalyses tRNA(Arg) + L-arginine + ATP = L-arginyl-tRNA(Arg) + AMP + diphosphate. This is Arginine--tRNA ligase from Bacteroides fragilis (strain ATCC 25285 / DSM 2151 / CCUG 4856 / JCM 11019 / LMG 10263 / NCTC 9343 / Onslow / VPI 2553 / EN-2).